The sequence spans 142 residues: Ornithine decarboxylase antizyme (142 aa).

Low complexity predominate over residues 1–19 (MSSSIVLSNNNSNSNSMSM). The tract at residues 1–34 (MSSSIVLSNNNSNSNSMSMIGQSPPCCSDVPNTP) is disordered.

It belongs to the ODC antizyme family. As to quaternary structure, interacts with ODC1 and thereby sterically blocks ODC homodimerization.

In terms of biological role, ornithine decarboxylase (ODC) antizyme protein that negatively regulates ODC activity and intracellular polyamine biosynthesis and uptake in response to increased intracellular polyamine levels. Binds to ODC monomers, inhibiting the assembly of the functional ODC homodimer, and targets the monomers for ubiquitin-independent proteolytic destruction by the 26S proteasome. In Pristionchus pacificus (Parasitic nematode), this protein is Ornithine decarboxylase antizyme.